The primary structure comprises 319 residues: sn-1-specific diacylglycerol lipase ABHD11 (319 aa).

A mitochondrion-targeting transit peptide spans 1–28; that stretch reads MTLKLAVLRQIFQGSKGWHLWQHWRAFY. An AB hydrolase-1 domain is found at 69 to 304; that stretch reads PPLVLLHGLF…GAGHWVHADK (236 aa). Residues serine 143, glutamate 239, and histidine 298 each act as charge relay system in the active site.

Belongs to the AB hydrolase superfamily. Phosphorylated.

The protein localises to the mitochondrion. The protein resides in the mitochondrion matrix. The catalysed reaction is 1-octadecanoyl-2-(5Z,8Z,11Z,14Z-eicosatetraenoyl)-sn-glycerol + H2O = 2-(5Z,8Z,11Z,14Z-eicosatetraenoyl)-glycerol + octadecanoate + H(+). The enzyme catalyses a 1,2-diacyl-sn-glycerol + H2O = a 2-acylglycerol + a fatty acid + H(+). It catalyses the reaction a 1,3-diacyl-sn-glycerol + H2O = a 1-acyl-sn-glycerol + a fatty acid + H(+). It carries out the reaction 1-octadecanoyl-2-(9Z-octadecenoyl)-sn-glycerol + H2O = 2-(9Z-octadecenoyl)-glycerol + octadecanoate + H(+). The catalysed reaction is 1-octadecanoyl-2-(4Z,7Z,10Z,13Z,16Z,19Z-docosahexaenoyl)-sn-glycerol + H2O = 2-(4Z,7Z,10Z,13Z,16Z,19Z-docosahexaenoyl)-glycerol + octadecanoate + H(+). The enzyme catalyses 1,2-didecanoylglycerol + H2O = decanoylglycerol + decanoate + H(+). Catalyzes the hydrolysis of diacylglycerol in vitro and may function as a key regulator in lipid metabolism, namely by regulating the intracellular levels of diacylglycerol. 1,2-diacyl-sn-glycerols are the preferred substrate over 1,3-diacyl-sn-glycerols. The enzyme hydrolyzes stearate in preference to palmitate from the sn-1 position of 1,2-diacyl-sn-glycerols. This Xenopus tropicalis (Western clawed frog) protein is sn-1-specific diacylglycerol lipase ABHD11.